The following is a 769-amino-acid chain: Cullin-3 (769 aa).

Residues 614 to 655 (DRELPSTTSSTTTTTTTATSSSTSTSPSSSSSSISTPTPSKS) are disordered. Residues 618–653 (PSTTSSTTTTTTTATSSSTSTSPSSSSSSISTPTPS) are compositionally biased toward low complexity. Residues 699 to 761 (DRKHQIEASI…REYLERSKQD (63 aa)) enclose the Cullin neddylation domain. K713 participates in a covalent cross-link: Glycyl lysine isopeptide (Lys-Gly) (interchain with G-Cter in NEDD8).

The protein belongs to the cullin family. Neddylated. Deneddylated via its interaction with the COP9 signalosome (CSN) complex.

The protein resides in the nucleus. Its pathway is protein modification; protein ubiquitination. In terms of biological role, probable core component of cullin-based SCF-like E3 ubiquitin-protein ligase complexes which mediate the ubiquitination and subsequent proteasomal degradation of target proteins. The E3 ubiquitin-protein ligase activity of the complex is dependent on the neddylation of the cullin subunit. This is Cullin-3 (culC) from Dictyostelium discoideum (Social amoeba).